Reading from the N-terminus, the 142-residue chain is Transmembrane protein 170A (142 aa).

The Lumenal segment spans residues 1–48 (MEGGGGGLGGEPGLLQQILSLRLVPRVGNVTDCQRATLCSFPEMWYGV). A glycan (N-linked (GlcNAc...) asparagine) is linked at Asn-29. Residues 49–69 (FLWALVSSLFFHIPAGLLALF) traverse the membrane as a helical segment. The Cytoplasmic portion of the chain corresponds to 70–78 (TLRHHKYGR). The chain crosses the membrane as a helical span at residues 79–99 (FMSVGIFLMGVLGPISAGILT). Residues 100 to 114 (SAAIAGVYKAAGKEM) are Lumenal-facing. The chain crosses the membrane as a helical span at residues 115–135 (IPFEALVLGVGQTFCVLIVSF). Over 136–142 (LRILATL) the chain is Cytoplasmic.

The protein belongs to the TMEM170 family.

It localises to the endoplasmic reticulum membrane. The protein localises to the nucleus envelope. In terms of biological role, may regulate membrane morphogenesis in the endoplasmic reticulum (ER) by promoting ER sheet formation at the expense of ER tubules. The protein is Transmembrane protein 170A (tmem170a) of Xenopus laevis (African clawed frog).